The sequence spans 179 residues: Peptide deformylase 2 (179 aa).

Positions 104 and 146 each coordinate Fe cation. Glu-147 is a catalytic residue. Residue His-150 coordinates Fe cation.

This sequence belongs to the polypeptide deformylase family. Requires Fe(2+) as cofactor.

It carries out the reaction N-terminal N-formyl-L-methionyl-[peptide] + H2O = N-terminal L-methionyl-[peptide] + formate. In terms of biological role, removes the formyl group from the N-terminal Met of newly synthesized proteins. Requires at least a dipeptide for an efficient rate of reaction. N-terminal L-methionine is a prerequisite for activity but the enzyme has broad specificity at other positions. The polypeptide is Peptide deformylase 2 (Streptomyces coelicolor (strain ATCC BAA-471 / A3(2) / M145)).